Consider the following 391-residue polypeptide: Phosphoglycerate kinase (391 aa).

Substrate is bound by residues Asp-21–Asn-23, Arg-36, His-59–Arg-62, Arg-113, and Arg-146. ATP contacts are provided by residues Lys-197, Glu-319, and Gly-345–Thr-348.

The protein belongs to the phosphoglycerate kinase family. In terms of assembly, monomer.

It is found in the cytoplasm. The catalysed reaction is (2R)-3-phosphoglycerate + ATP = (2R)-3-phospho-glyceroyl phosphate + ADP. It participates in carbohydrate degradation; glycolysis; pyruvate from D-glyceraldehyde 3-phosphate: step 2/5. The protein is Phosphoglycerate kinase of Shewanella baltica (strain OS195).